Reading from the N-terminus, the 456-residue chain is Asparagine--tRNA ligase (456 aa).

It belongs to the class-II aminoacyl-tRNA synthetase family. In terms of assembly, homodimer.

The protein resides in the cytoplasm. The catalysed reaction is tRNA(Asn) + L-asparagine + ATP = L-asparaginyl-tRNA(Asn) + AMP + diphosphate + H(+). The chain is Asparagine--tRNA ligase from Mycoplasma genitalium (strain ATCC 33530 / DSM 19775 / NCTC 10195 / G37) (Mycoplasmoides genitalium).